The primary structure comprises 631 residues: Golgin subfamily A member 8R (631 aa).

The disordered stretch occupies residues 1 to 72 (MAEETQHNKL…REGPTSSATL (72 aa)). The span at 38 to 50 (TNGSIPETATSGG) shows a compositional bias: polar residues. 3 coiled-coil regions span residues 85-149 (VLDS…NTDL), 209-247 (ELEQ…HIEG), and 303-419 (SEVE…LSLM). Disordered regions lie at residues 422 to 451 (PGEG…DPES), 502 to 523 (AKDA…DEGE), and 551 to 610 (NSAD…QEHP). Positions 507-519 (LGGGHHQAGAQGG) are enriched in gly residues. Basic and acidic residues predominate over residues 568–577 (AADKHGDLRE).

Belongs to the GOLGA8 family.

This Homo sapiens (Human) protein is Golgin subfamily A member 8R.